A 177-amino-acid polypeptide reads, in one-letter code: Adenine phosphoribosyltransferase (177 aa).

This sequence belongs to the purine/pyrimidine phosphoribosyltransferase family. In terms of assembly, homodimer.

The protein resides in the cytoplasm. The enzyme catalyses AMP + diphosphate = 5-phospho-alpha-D-ribose 1-diphosphate + adenine. It functions in the pathway purine metabolism; AMP biosynthesis via salvage pathway; AMP from adenine: step 1/1. Catalyzes a salvage reaction resulting in the formation of AMP, that is energically less costly than de novo synthesis. The chain is Adenine phosphoribosyltransferase from Idiomarina loihiensis (strain ATCC BAA-735 / DSM 15497 / L2-TR).